The sequence spans 134 residues: Small ribosomal subunit protein uS8 (134 aa).

This sequence belongs to the universal ribosomal protein uS8 family. As to quaternary structure, part of the 30S ribosomal subunit. Contacts proteins S5 and S12.

Its function is as follows. One of the primary rRNA binding proteins, it binds directly to 16S rRNA central domain where it helps coordinate assembly of the platform of the 30S subunit. The sequence is that of Small ribosomal subunit protein uS8 from Thermosipho melanesiensis (strain DSM 12029 / CIP 104789 / BI429).